A 130-amino-acid chain; its full sequence is Small ribosomal subunit protein uS11 (130 aa).

It belongs to the universal ribosomal protein uS11 family. Part of the 30S ribosomal subunit. Interacts with proteins S7 and S18. Binds to IF-3.

Its function is as follows. Located on the platform of the 30S subunit, it bridges several disparate RNA helices of the 16S rRNA. Forms part of the Shine-Dalgarno cleft in the 70S ribosome. The protein is Small ribosomal subunit protein uS11 of Parasynechococcus marenigrum (strain WH8102).